A 109-amino-acid polypeptide reads, in one-letter code: uncharacterized protein (109 aa).

The next 2 helical transmembrane spans lie at 24–44 and 68–88; these read SLGI…SAFV and VIVL…SIFI.

The protein localises to the membrane. This is an uncharacterized protein from Saccharomyces cerevisiae (strain ATCC 204508 / S288c) (Baker's yeast).